A 38-amino-acid chain; its full sequence is Large ribosomal subunit protein bL36 (38 aa).

Belongs to the bacterial ribosomal protein bL36 family.

The chain is Large ribosomal subunit protein bL36 from Lacticaseibacillus casei (strain BL23) (Lactobacillus casei).